The primary structure comprises 373 residues: Phospho-N-acetylmuramoyl-pentapeptide-transferase (373 aa).

10 consecutive transmembrane segments (helical) span residues 28-48 (LLTVITSLAFSIILGPRTIAY), 72-92 (TPTMGGVLILTSIGFSTLCWA), 94-114 (LANPYVWILMVVMVIFGAVGW), 135-155 (YFWLSVGALFVGSSLYYIASQ), 177-197 (IVPLSALPLGLGFIIFTYFVI), 212-232 (GLAILPVVFVAAGLGVFSYVS), 252-272 (VTIVCAAMIGSGLGFLWYNAH), 276-296 (VFMGDVGALALGAMLGTIAVM), 301-321 (IAFAIMGGLFVAEALSVILQV), and 350-370 (QVVVRFWIIAILLVVLGLMTL).

It belongs to the glycosyltransferase 4 family. MraY subfamily. The cofactor is Mg(2+).

Its subcellular location is the cell inner membrane. The enzyme catalyses UDP-N-acetyl-alpha-D-muramoyl-L-alanyl-gamma-D-glutamyl-meso-2,6-diaminopimeloyl-D-alanyl-D-alanine + di-trans,octa-cis-undecaprenyl phosphate = di-trans,octa-cis-undecaprenyl diphospho-N-acetyl-alpha-D-muramoyl-L-alanyl-D-glutamyl-meso-2,6-diaminopimeloyl-D-alanyl-D-alanine + UMP. The protein operates within cell wall biogenesis; peptidoglycan biosynthesis. In terms of biological role, catalyzes the initial step of the lipid cycle reactions in the biosynthesis of the cell wall peptidoglycan: transfers peptidoglycan precursor phospho-MurNAc-pentapeptide from UDP-MurNAc-pentapeptide onto the lipid carrier undecaprenyl phosphate, yielding undecaprenyl-pyrophosphoryl-MurNAc-pentapeptide, known as lipid I. This Psychrobacter sp. (strain PRwf-1) protein is Phospho-N-acetylmuramoyl-pentapeptide-transferase.